Consider the following 435-residue polypeptide: MSIRVLTGITTSGTPHLGNYVGAIRPAIRAAGAPGTESFYFLADLHSLIKVQDPERTQRSTLEIAATWLACGLDPEKVWLYRQSDVPEITELMWLLTCVAGKGILNRAHAYKAVVDKNRSHGDDDDAGITAGLFMYPVLMAADILLFNAHQVPVGRDQIQHIEMARDFAQRFNHIYGGEYLVLPEAAIDEQVATLPGLDGRKMSKSYGNTMPLFCTREELKKYVFSIVTDSRAPGEPKEAVGSAVFQLYQAFAGVEECSMFAQALVEGLGWGEAKVRLFERIDAEVAPLRERYEDFMRRPADIEAMLRDSAGRLRERDAIPLLARLREAVGLRSLSLCMVSAVPVPQEKVALPVLKQYREQDGRFYFKLIDGQGAVLVQSRGFASPRDAGQWIALFKQVVSAEALVSPMLEPVADPVVVLAALRRLREAGLDLYT.

Residues T10 to S12 and G18 to N19 contribute to the ATP site. The short motif at T11 to N19 is the 'HIGH' region element. An L-tryptophan-binding site is contributed by D143. Residues G155–D157, L195, and K202–S206 each bind ATP. The 'KMSKS' region signature appears at K202–S206.

The protein belongs to the class-I aminoacyl-tRNA synthetase family. As to quaternary structure, homodimer.

The protein resides in the cytoplasm. It carries out the reaction tRNA(Trp) + L-tryptophan + ATP = L-tryptophyl-tRNA(Trp) + AMP + diphosphate + H(+). Catalyzes the attachment of tryptophan to tRNA(Trp). The chain is Tryptophan--tRNA ligase from Xylella fastidiosa (strain Temecula1 / ATCC 700964).